The sequence spans 430 residues: Putative O-antigen transporter (430 aa).

The next 12 helical transmembrane spans lie at 23–39 (IIIAGVQLASISYLISM), 45–61 (YAIFSLLTGLLVWCSAV), 96–112 (IAIIFFIALFYIFSGVI), 131–147 (LFFTSCLVFSSIGIGAI), 163–179 (LLNALSYMIGMLGLLYI), 192–208 (LIVLYLPVGMISLCYIV), 236–252 (LFTLLSIVVLQTDYMVI), 266–282 (VTMKIFGLVFFIYTAIL), 309–325 (ILLGSLYVVGCTIFIYL), 342–358 (VSILSFMLIGIYFCIRV), 373–389 (LKILWILVPLQAIIGGI), and 400–416 (ISGVLLGLIISFALTVF).

It localises to the cell inner membrane. It functions in the pathway bacterial outer membrane biogenesis; LPS O-antigen biosynthesis. Its function is as follows. May be involved in the translocation process of the nascent O-polysaccharide molecules and/or its ligation to lipid A core units. This chain is Putative O-antigen transporter (rfbX), found in Salmonella typhimurium (strain LT2 / SGSC1412 / ATCC 700720).